The primary structure comprises 478 residues: MATYVSPCFTPSDSRLLTVLRKNVLPENHLGRLNSIRTIDSKKNRVVVAAQKSESSPIRNSPRHYQSQAQDPFLNLHPEISMLRGEGTSTIVNPRKETSSGPVVEDFEEPSAPSNYNEARIKVIGVGGGGSNAVNRMIESEMSGVEFWIVNTDIQAMRMSPVLPDNRLQIGKELTRGLGAGGNPEIGMNAARESKEVIEEALYGSDMVFVTAGMGGGTGTGAAPVIAGIAKAMGILTVGIATTPFSFEGRRRTVQAQEGLASLRDNVDTLIVIPNDKLLTAVSQSTPVTEAFNLADDILRQGVRGISDIITIPGLVNVDFADVRAIMANAGSSLMGIGTATGKSRARDAALNAIQSPLLDIGIERATGIVWNITGGSDLTLFEVNAAAEVIYDLVDPTANLIFGAVVDPALSGQVSITLIATGFKRQEEGEGRTVQMVQADAASVGATRRPSSSFRESGSVEIPEFLKKKGSSRYPRV.

The tract at residues 86-112 is disordered; the sequence is EGTSTIVNPRKETSSGPVVEDFEEPSA. 128–132 contributes to the GTP binding site; that stretch reads GGGSN. Residue S143 is modified to Phosphoserine; by PGK1. GTP-binding positions include 217 to 219, E248, and R252; that span reads GTG. T286 carries the post-translational modification Phosphothreonine; by PGK1. A GTP-binding site is contributed by D296.

It belongs to the FtsZ family. Aggregates to form a contractile ring-like structure; contraction of the ring was accompanied by an increase in the filament turnover rate. Self-interacts and binds to FTSZ1 in heteromers to form two morphologically distinct types of filaments, termed type-I (smooth filaments) and -II (rough filaments), in a GTP-dependent manner; the GDP-induced disassembly is inhibited by ARC6. Interacts (via C-terminus) with ARC6; this interaction enables ARC3 binding to FTSZ2. Part of a complex made of ARC3, ARC6, FTSZ1 and FTSZ2. Binds to MCD1 in an ARC6-dependent manner. Binds to CDP1/PARC6. Part of a complex made of CDP1/PARC6, ARC3 and FtsZ proteins in the middle of the plastid; this complex enhances the dynamics of Z rings during chloroplast division. Binds to PGK1. Post-translationally, filaments containing FTSZ2-1 are stabilized when in complex with GTP but destabilized after conversion of GTP into GDP; ARC6 conteracts this destabilisation by preventing the dissociation of GDP-bound FTSZ2 molecules thus inhibiting filament disassembly whereas ARC3 promotes GTPase activity thus accelerating the conversion of GTP into GDP and triggering FtsZ2 filaments disassembly. In terms of processing, phosphorylation at Ser-143 is necessary for interactions with ARC3, ARC6, FTSZ1 and FTSZ2-2. Phosphorylations at Ser-143 and Thr-286 are required for the formation of contractile ring at the chloroplast midpoint.

The protein localises to the plastid. The protein resides in the chloroplast stroma. Its subcellular location is the chloroplast thylakoid membrane. Its activity is regulated as follows. GTPase activity is enhanced by ARC3. In terms of biological role, exhibits GTPase activity which converts GTP ligands to GDP. Component of the plastid division machinery consisting in a binary fission accomplished by the simultaneous constriction of the FtsZ ring on the stromal side of the inner envelope membrane, and the ARC5 ring on the cytosolic side of the outer envelope membrane. Required for plastid division in a dose-dependent manner. In the vegetative shoot apex, at the shoot apical meristem (SAM), where the proplastid-to-chloroplast transition takes place, major contributor of plastid division in the L1 and L3 layers and contributes equally with FTSZ1 in the L2 layer. This chain is Cell division protein FtsZ homolog 2-1, chloroplastic, found in Arabidopsis thaliana (Mouse-ear cress).